Here is a 206-residue protein sequence, read N- to C-terminus: Small ribosomal subunit protein uS4 (206 aa).

Residues 96 to 156 enclose the S4 RNA-binding domain; that stretch reads GRLDNVVYRM…EKSKKQSRIK (61 aa).

It belongs to the universal ribosomal protein uS4 family. As to quaternary structure, part of the 30S ribosomal subunit. Contacts protein S5. The interaction surface between S4 and S5 is involved in control of translational fidelity.

Its function is as follows. One of the primary rRNA binding proteins, it binds directly to 16S rRNA where it nucleates assembly of the body of the 30S subunit. Functionally, with S5 and S12 plays an important role in translational accuracy. The chain is Small ribosomal subunit protein uS4 from Photorhabdus laumondii subsp. laumondii (strain DSM 15139 / CIP 105565 / TT01) (Photorhabdus luminescens subsp. laumondii).